The following is a 99-amino-acid chain: MERLRIIRESRGSYVIQVYGEDHTLGTLLVEAIKRVSNPKLAYYEAVHPMEDIIQVYVKYEDDVDIKEVLRKASDYLLEVIGDFRRRYLEALERRGGGG.

Belongs to the archaeal Rpo11/eukaryotic RPB11/RPC19 RNA polymerase subunit family. As to quaternary structure, part of the RNA polymerase complex.

It is found in the cytoplasm. The catalysed reaction is RNA(n) + a ribonucleoside 5'-triphosphate = RNA(n+1) + diphosphate. Functionally, DNA-dependent RNA polymerase (RNAP) catalyzes the transcription of DNA into RNA using the four ribonucleoside triphosphates as substrates. In Aeropyrum pernix (strain ATCC 700893 / DSM 11879 / JCM 9820 / NBRC 100138 / K1), this protein is DNA-directed RNA polymerase subunit Rpo11.